A 273-amino-acid polypeptide reads, in one-letter code: Undecaprenyl-diphosphatase (273 aa).

8 helical membrane passes run 4-24 (MELWKAIILGMVEGLTEFAPV), 48-68 (AANTFKVVIQLGSILAAVVVF), 89-109 (LNLIHVIIGLLPAGVLGVLFE), 116-136 (LFSTKTVLIGLVLGALLMIAA), 152-172 (ITYKQAFFVGLMQCLSLWPGF), 193-213 (ADFTFIMAVPIMAGASGLSLL), 222-242 (ADIPFFIAGFFSAFVFALLAI), and 252-272 (IRLVPFAVYRIVLAVVIYFLY).

Belongs to the UppP family.

It localises to the cell membrane. The catalysed reaction is di-trans,octa-cis-undecaprenyl diphosphate + H2O = di-trans,octa-cis-undecaprenyl phosphate + phosphate + H(+). In terms of biological role, catalyzes the dephosphorylation of undecaprenyl diphosphate (UPP). Confers resistance to bacitracin. The chain is Undecaprenyl-diphosphatase from Geobacillus kaustophilus (strain HTA426).